The chain runs to 292 residues: MSERLSGHTLLVSLLATPIRHSLSPKMHNEAYAKLGLDYAYLAFEVGTEQLADAVQGIRALGIRGSNVSMPNKEAILPLLDDLSPAAELVGAVNTVVNKDGKGHLVGHITDGIGALRALADEGVSVKNKIITLAGVGGAGKAIAVQLAFDGAKEIRLFNRQATRLSSVQKLVTKLNQLTRTKVTLQDLEDQTAFKEAIRESHLFIDATSVGMKPLENLSLITDPELIRPDLVVFDIVYSPAETKLLAFARQHGAQKVINGLGMVLYQGAEAFKLITGQDMPVDAIKPLLGDE.

Shikimate is bound by residues 22-24 (SLS) and Ser69. Lys73 acts as the Proton acceptor in catalysis. 2 residues coordinate shikimate: Asn94 and Asp111. NADP(+) contacts are provided by residues 135–139 (GVGGA) and Ile236. Tyr238 is a shikimate binding site. Gly260 serves as a coordination point for NADP(+).

This sequence belongs to the shikimate dehydrogenase family. Homodimer.

It carries out the reaction shikimate + NADP(+) = 3-dehydroshikimate + NADPH + H(+). The protein operates within metabolic intermediate biosynthesis; chorismate biosynthesis; chorismate from D-erythrose 4-phosphate and phosphoenolpyruvate: step 4/7. Involved in the biosynthesis of the chorismate, which leads to the biosynthesis of aromatic amino acids. Catalyzes the reversible NADPH linked reduction of 3-dehydroshikimate (DHSA) to yield shikimate (SA). This Streptococcus pyogenes serotype M28 (strain MGAS6180) protein is Shikimate dehydrogenase (NADP(+)).